The chain runs to 401 residues: MGLKALCLGLLCVLFVSHFYTPMPDNIEESWKIMALDAIAKTCTFTAMCFENMRIMRYEEFISMIFRLDYTQPLSDEYITVTDTTFVDIPVRLYLPKRKSETRRRAVIYFHGGGFCFGSSKQRAFDFLNRWTANTLDAVVVGVDYRLAPQHHFPAQFEDGLAAVKFFLLEKILTKYGVDPTRICIAGDSSGGNLATAVTQQVQNDAEIKHKIKMQVLLYPGLQITDSYLPSHRENEHGIVLTRDVAIKLVSLYFTKDEALPWAMRRNQHMPLESRHLFKFVNWSILLPEKYRKDYVYTEPILGGLSYSLPGLTDSRALPLLANDSQLQNLPLTYILTCQHDLLRDDGLMYVTRLRNVGVQVVHEHIEDGIHGALSFMTSPFYLRLGLRIRDMYVSWLDKNL.

The signal sequence occupies residues 1–18 (MGLKALCLGLLCVLFVSH). Residues 111 to 113 (HGG) carry the Involved in the stabilization of the negatively charged intermediate by the formation of the oxyanion hole motif. The cysteines at positions 116 and 338 are disulfide-linked. Residues Ser189, Asp341, and His371 contribute to the active site.

The protein belongs to the 'GDXG' lipolytic enzyme family.

Its subcellular location is the secreted. This chain is Arylacetamide deacetylase-like 2 (AADACL2), found in Homo sapiens (Human).